Reading from the N-terminus, the 308-residue chain is UDP-N-acetylenolpyruvoylglucosamine reductase (308 aa).

The FAD-binding PCMH-type domain occupies 32 to 196; sequence VGGPAARLYK…ISAKLQLSPG (165 aa). The active site involves Arg-176. Ser-225 acts as the Proton donor in catalysis. Glu-296 is a catalytic residue.

It belongs to the MurB family. FAD is required as a cofactor.

The protein resides in the cytoplasm. It catalyses the reaction UDP-N-acetyl-alpha-D-muramate + NADP(+) = UDP-N-acetyl-3-O-(1-carboxyvinyl)-alpha-D-glucosamine + NADPH + H(+). It participates in cell wall biogenesis; peptidoglycan biosynthesis. Cell wall formation. The chain is UDP-N-acetylenolpyruvoylglucosamine reductase from Legionella pneumophila (strain Corby).